Consider the following 127-residue polypeptide: DNA-directed RNA polymerase subunit omega (127 aa).

This sequence belongs to the RNA polymerase subunit omega family. The RNAP catalytic core consists of 2 alpha, 1 beta, 1 beta' and 1 omega subunit. When a sigma factor is associated with the core the holoenzyme is formed, which can initiate transcription.

It catalyses the reaction RNA(n) + a ribonucleoside 5'-triphosphate = RNA(n+1) + diphosphate. Functionally, promotes RNA polymerase assembly. Latches the N- and C-terminal regions of the beta' subunit thereby facilitating its interaction with the beta and alpha subunits. This Rickettsia typhi (strain ATCC VR-144 / Wilmington) protein is DNA-directed RNA polymerase subunit omega.